We begin with the raw amino-acid sequence, 553 residues long: Putative transport protein YidE (553 aa).

5 helical membrane-spanning segments follow: residues 4-24 (IALTVSILALVAVVGLFIGNV), 28-48 (GIGLGIGGVLFGGIIVGHFVS), 65-85 (FGLILFVYTIGIQVGPGFFAS), 95-115 (LFAVLIVIIGGLVTAILHKLF), and 158-178 (MSYAMAYPFGICGILFTMWML). 2 consecutive RCK C-terminal domains span residues 191-276 (QQHE…VIGQ) and 279-361 (DTSL…VLGN). 6 helical membrane-spanning segments follow: residues 371–391 (MLPVFIGIGLGVLLGSIPVFV), 393–413 (GFPAALKLGLAGGPLIMALIL), 439–459 (IVLFLSVVGLKSGGDFVNTLV), 464–484 (LSWIGYGALITAVPLITVGIL), 493–513 (YLTMCGMLAGSMTDPPALAFA), and 533–553 (LVMFLRIITPQLLAVLFWSIG).

Belongs to the AAE transporter (TC 2.A.81) family. YidE subfamily.

Its subcellular location is the cell membrane. This is Putative transport protein YidE from Shigella boydii serotype 18 (strain CDC 3083-94 / BS512).